Consider the following 24-residue polypeptide: Transaldolase (24 aa).

It belongs to the transaldolase family.

It localises to the cytoplasm. It carries out the reaction D-sedoheptulose 7-phosphate + D-glyceraldehyde 3-phosphate = D-erythrose 4-phosphate + beta-D-fructose 6-phosphate. It participates in carbohydrate degradation; pentose phosphate pathway; D-glyceraldehyde 3-phosphate and beta-D-fructose 6-phosphate from D-ribose 5-phosphate and D-xylulose 5-phosphate (non-oxidative stage): step 2/3. Transaldolase is important for the balance of metabolites in the pentose-phosphate pathway. The chain is Transaldolase from Capsicum annuum var. annuum (Red pepper).